The primary structure comprises 280 residues: Merozoite surface protein 2 (280 aa).

Positions 1–20 (MKVIKTLSIINFFIFVTFNI) are cleaved as a signal peptide. N-linked (GlcNAc...) asparagine glycans are attached at residues asparagine 22 and asparagine 36. The polymorphic region stretch occupies residues 44 to 206 (ANEGSNTKSV…PQTAENENPA (163 aa)). The tract at residues 47–242 (GSNTKSVGAN…SQKECTDGNK (196 aa)) is disordered. The segment at 51-74 (KSVGANAPKADTIASGSQSSTNSA) is 5 X 12 AA tandem repeats of P-P-I-T-T-T-E-S-N-S-R-S. Residues 64–98 (ASGSQSSTNSASTSTTNNGESQTTTPTAADTPTAT) show a composition bias toward low complexity. Residues 99 to 149 (ESNSRSPPITTTESNSRSPPITTTESNSRSPPITTTESNSRSPPITTTESN) are compositionally biased toward polar residues. Tandem repeats lie at residues 105–116 (PPITTTESNSRS), 117–128 (PPITTTESNSRS), 129–140 (PPITTTESNSRS), and 141–152 (PPITTTESNSRS). Residues 150–163 (SRSPPITTTESSSS) are compositionally biased toward low complexity. A 5; partial repeat occupies 153–160 (PPITTTES). The N-linked (GlcNAc...) asparagine glycan is linked to asparagine 168. Residues 170 to 182 (TDGKGEESEKQNE) are compositionally biased toward basic and acidic residues. N-linked (GlcNAc...) asparagine glycans are attached at residues asparagine 184 and asparagine 229. The segment covering 233 to 242 (SQKECTDGNK) has biased composition (basic and acidic residues). Residues cysteine 237 and cysteine 245 are joined by a disulfide bond. Asparagine 253 and asparagine 254 each carry an N-linked (GlcNAc...) asparagine glycan. Residue asparagine 254 is the site of GPI-anchor amidated asparagine attachment. Positions 255-280 (SSNIASINKFVVLISATLVLSFAIFI) are cleaved as a propeptide — removed in mature form.

It is found in the cell membrane. Functionally, may play a role in the merozoite attachment to the erythrocyte. In Plasmodium falciparum (isolate K1 / Thailand), this protein is Merozoite surface protein 2.